The chain runs to 195 residues: MIIRDVELVKVARTPGDYPPPLKGEVAFVGRSNVGKSSLLNALFNRKIAFVSKTPGKTRSINFYLVNSKYYFVDLPGYGYAKVSKKERMLWKRLVEDYFKNRWSLQMVFLLVDGRIPPQDSDLMMVEWMKSLNIPFTIVLTKMDKVKMSERAKKLEEHRKVFSKYGEYTIIPTSSVTGEGISELLDLISTLLKEN.

The 173-residue stretch at 22-194 folds into the EngB-type G domain; that stretch reads LKGEVAFVGR…LDLISTLLKE (173 aa). Residues 30-37, 56-60, 74-77, 141-144, and 173-175 contribute to the GTP site; these read GRSNVGKS, GKTRS, DLPG, TKMD, and TSS. Positions 37 and 58 each coordinate Mg(2+).

It belongs to the TRAFAC class TrmE-Era-EngA-EngB-Septin-like GTPase superfamily. EngB GTPase family. Mg(2+) serves as cofactor.

In terms of biological role, necessary for normal cell division and for the maintenance of normal septation. The chain is Probable GTP-binding protein EngB from Thermotoga maritima (strain ATCC 43589 / DSM 3109 / JCM 10099 / NBRC 100826 / MSB8).